The chain runs to 77 residues: Secapin (77 aa).

Residues 1 to 32 form the signal peptide; sequence MKNYSKNATHLITVLLFSFVVILLIIPSKCEA. A propeptide spanning residues 33-52 is cleaved from the precursor; that stretch reads VSNDMQPLEARSADLVPEPR. C61 and C72 are disulfide-bonded.

The protein belongs to the secapin family. Expressed by the venom gland.

It localises to the secreted. In terms of biological role, serine protease inhibitor which exhibits antifibrinolytic, antielastolytic and antimicrobial activities. Displays antimicrobial activity against bacteria and fungi. Likely functions in the innate immune response to microbial infection and possibly in the venom, as an antifibrinolytic agent. Not toxic to mice but does induce slight sedation at higher doses (from 40 mg/kg). At a dose of 80 mg/kg, sedation occurs 15 minutes after injection and is accompanied by piloerection and hypothermia. In Apis mellifera (Honeybee), this protein is Secapin.